The chain runs to 1401 residues: Enhancer of mRNA-decapping protein 4 (1401 aa).

At Ala2 the chain carries N-acetylalanine. 2 positions are modified to phosphoserine: Ser3 and Ser6. Positions 23–42 are disordered; sequence DRPAGGPSAESPRPSSAYNG. WD repeat units lie at residues 121–164, 167–206, 217–269, 287–326, 335–385, 389–426, and 432–475; these read QPVA…VISV, SERT…VWRL, ILVH…VWDL, KQGF…FWQI, RCLH…MWCT, TCLQ…LSDV, and YVME…LRHT. Lys125 is subject to N6-acetyllysine. Residues 545–565 are disordered; that stretch reads TFGESRPELGSEGLGSAAHGS. Residues Ser560, Ser565, Ser583, and Ser585 each carry the phosphoserine modification. 2 disordered regions span residues 603–628 and 662–702; these read ASLQ…SSSS and DGSL…QVPT. Over residues 609–628 the composition is skewed to low complexity; the sequence is TASPSSSSSGSSSSSSSSSS. Polar residues predominate over residues 663 to 675; sequence GSLTMSSSGSLQA. At Ser676 the chain carries Phosphoserine. Residues 677–689 are compositionally biased toward low complexity; it reads PRGLLPGLLPAPA. Residue Thr693 is modified to Phosphothreonine. 3 positions are modified to phosphoserine: Ser708, Ser723, and Ser725. 2 disordered regions span residues 717–741 and 778–808; these read LGLP…TALS and LLSP…HNTP. Positions 722–741 are enriched in polar residues; sequence ASPSRTRSPDVISSASTALS. A Phosphothreonine modification is found at Thr727. Ser729 and Ser741 each carry phosphoserine. Thr821 is modified (phosphothreonine). Phosphoserine occurs at positions 844, 871, 875, 879, 887, 890, and 892. Positions 868-946 are disordered; it reads QRDSQDASAE…RLTEHQVAEP (79 aa). Residues 913-934 form a sufficient for nuclear localization region; that stretch reads GSPRTSPKLKRKSKKDDGDAAM. Positions 954–1025 form a coiled coil; sequence IWQQQRELAE…GGQLQEQLTQ (72 aa). Ser967 and Ser1380 each carry phosphoserine.

This sequence belongs to the WD repeat EDC4 family. As to quaternary structure, part of a decapping complex consisting of DCP1A, DCP2, EDC3, EDC4 and probably DDX6. Part of a complex consisting of DCP1A, EDC3, EDC4 and DDX6. Part of a complex consisting of DCP1B, EDC3, EDC4 and DDX6. Interacts with DCP2. Interacts with RC3H1. Interacts with NBDY. Interacts with TEX19. Interacts with LSM14A. Interacts with DDX6. In terms of assembly, (Microbial infection) Interacts with rotavirus A non-structural protein 2; this interaction probably plays a role in the sequestration of EDC4 in viral factories. Interacts with rotavirus A non-structural protein 5; this interaction probably plays a role in its sequestration in viral factories.

The protein localises to the cytoplasm. The protein resides in the P-body. Its subcellular location is the nucleus. In terms of biological role, in the process of mRNA degradation, seems to play a role in mRNA decapping. Component of a complex containing DCP2 and DCP1A which functions in decapping of ARE-containing mRNAs. Promotes complex formation between DCP1A and DCP2. Enhances the catalytic activity of DCP2 (in vitro). The protein is Enhancer of mRNA-decapping protein 4 (EDC4) of Homo sapiens (Human).